A 399-amino-acid chain; its full sequence is S-adenosylmethionine synthase (399 aa).

Gly135 to Asp140 contacts ATP.

It belongs to the AdoMet synthase 2 family. It depends on Mg(2+) as a cofactor.

It catalyses the reaction L-methionine + ATP + H2O = S-adenosyl-L-methionine + phosphate + diphosphate. The protein operates within amino-acid biosynthesis; S-adenosyl-L-methionine biosynthesis; S-adenosyl-L-methionine from L-methionine: step 1/1. Its function is as follows. Catalyzes the formation of S-adenosylmethionine from methionine and ATP. In Archaeoglobus fulgidus (strain ATCC 49558 / DSM 4304 / JCM 9628 / NBRC 100126 / VC-16), this protein is S-adenosylmethionine synthase (mat).